The sequence spans 318 residues: Transaldolase (318 aa).

Residue lysine 132 is the Schiff-base intermediate with substrate of the active site.

The protein belongs to the transaldolase family. Type 1 subfamily. In terms of assembly, homodimer.

The protein resides in the cytoplasm. The catalysed reaction is D-sedoheptulose 7-phosphate + D-glyceraldehyde 3-phosphate = D-erythrose 4-phosphate + beta-D-fructose 6-phosphate. It participates in carbohydrate degradation; pentose phosphate pathway; D-glyceraldehyde 3-phosphate and beta-D-fructose 6-phosphate from D-ribose 5-phosphate and D-xylulose 5-phosphate (non-oxidative stage): step 2/3. In terms of biological role, transaldolase is important for the balance of metabolites in the pentose-phosphate pathway. This chain is Transaldolase, found in Shewanella piezotolerans (strain WP3 / JCM 13877).